Here is a 414-residue protein sequence, read N- to C-terminus: Dimethylsulfoniopropionate lyase DddY (414 aa).

The first 18 residues, 1-18, serve as a signal peptide directing secretion; it reads MKYMVLFSGLLFSNVLVA.

This sequence belongs to the DMSP lyase DddY family.

It is found in the periplasm. The catalysed reaction is S,S-dimethyl-beta-propiothetin = acrylate + dimethyl sulfide + H(+). In terms of biological role, catalyzes the cleavage of dimethylsulfoniopropionate (DMSP) into dimethyl sulfide (DMS) and acrylate. The protein is Dimethylsulfoniopropionate lyase DddY of Shewanella woodyi (strain ATCC 51908 / MS32).